Here is a 360-residue protein sequence, read N- to C-terminus: Peptide chain release factor 1 (360 aa).

Q235 carries the N5-methylglutamine modification. The span at 281-307 shows a compositional bias: basic and acidic residues; sequence ERQRADSERSADRRSQVGSGDRSERIR. Residues 281-311 are disordered; it reads ERQRADSERSADRRSQVGSGDRSERIRTYNF.

It belongs to the prokaryotic/mitochondrial release factor family. In terms of processing, methylated by PrmC. Methylation increases the termination efficiency of RF1.

It localises to the cytoplasm. In terms of biological role, peptide chain release factor 1 directs the termination of translation in response to the peptide chain termination codons UAG and UAA. This Rhizobium meliloti (strain 1021) (Ensifer meliloti) protein is Peptide chain release factor 1.